Consider the following 788-residue polypeptide: Leucine-rich repeat and fibronectin type-III domain-containing protein 2 (788 aa).

The N-terminal stretch at 1 to 20 (METLLGGLLAFGMAFAVVDA) is a signal peptide. The LRRNT domain occupies 21 to 52 (CPKYCVCQNLSESLGTLCPSKGLLFVPPDIDR). The Extracellular portion of the chain corresponds to 21 to 534 (CPKYCVCQNL…MHSQILGGTM (514 aa)). N-linked (GlcNAc...) asparagine glycosylation occurs at asparagine 29. LRR repeat units follow at residues 53–74 (RTVE…DFAN), 77–98 (GLVD…SFLD), 101–122 (SLRS…TLRG), 125–146 (NLQH…AFED), 150–171 (TLED…SVRR), 174–195 (NLHQ…TFAD), and 198–219 (KLAR…PIFA). One can recognise an LRRCT domain in the interval 242–288 (NPLHCNCELLWLRRLERDDDLETCGSPGSLKGRYFWHIREEEFVCEP). The 87-residue stretch at 289–375 (PLITQHTHKL…GEATATVEVS (87 aa)) folds into the Ig-like domain. A disulfide bridge connects residues cysteine 310 and cysteine 359. 3 N-linked (GlcNAc...) asparagine glycosylation sites follow: asparagine 332, asparagine 341, and asparagine 384. Residues 383–423 (SNSTSRMAPPKSRLSDITGSSKTSRGGGGSGAGEPPKSTPE) are disordered. Residues 422 to 518 (PERAVLVSDV…GCAQFFTKAD (97 aa)) enclose the Fibronectin type-III domain. The chain crosses the membrane as a helical span at residues 535-555 (ILVIGGIIVATLLVFIVILMV). Residues 556–788 (RYKVCNHDTP…SSEWVMESTV (233 aa)) lie on the Cytoplasmic side of the membrane. Residues 620-631 (CDSSSSSSLGSG) show a composition bias toward low complexity. Disordered regions lie at residues 620–655 (CDSS…PSLD) and 668–711 (SQRK…RSLL). The segment covering 642–651 (RLPPPAPRPK) has biased composition (pro residues). The PDZ-binding signature appears at 785 to 788 (ESTV).

It belongs to the LRFN family. As to quaternary structure, forms heteromeric complexes with LRFN1, LRFN3, LRFN4 and LRFN5. Can form homomeric complexes, but not across cell junctions. Interacts with DLG4. Directly interacts with DLG1, DLG2 and DLG3. Directly interacts with 2 NMDA receptor subunits GRIN1 and GRIN2A. Glycosylated. Predominantly expressed in the brain, with a weak, but broad expression in the cerebral cortex and diencephalic nuclei. Strongly expressed in both the pyramidal layer and the dentate gyrus of the hippocampus. Also detected in other parts of the central nervous system, including the olfactory bulb, pons, cerebellum, and medulla oblongata, as well as in the peripheral nervous system, such as the ganglia of cranial nerves and the dorsal root ganglion during gestation.

Its subcellular location is the membrane. It localises to the synapse. It is found in the postsynaptic cell membrane. Its function is as follows. Promotes neurite outgrowth in hippocampal neurons. Enhances the cell surface expression of 2 NMDA receptor subunits GRIN1 and GRIN2A. May play a role in redistributing DLG4 to the cell periphery. The polypeptide is Leucine-rich repeat and fibronectin type-III domain-containing protein 2 (Lrfn2) (Mus musculus (Mouse)).